The primary structure comprises 342 residues: uncharacterized protein (342 aa).

Residues 155 to 309 form the Nudix hydrolase domain; sequence TYGIHINGYV…KPNCALVMVD (155 aa).

This is an uncharacterized protein from Saccharomyces cerevisiae (strain ATCC 204508 / S288c) (Baker's yeast).